Consider the following 292-residue polypeptide: GTP cyclohydrolase FolE2 (292 aa).

The protein belongs to the GTP cyclohydrolase IV family.

The catalysed reaction is GTP + H2O = 7,8-dihydroneopterin 3'-triphosphate + formate + H(+). It participates in cofactor biosynthesis; 7,8-dihydroneopterin triphosphate biosynthesis; 7,8-dihydroneopterin triphosphate from GTP: step 1/1. Functionally, converts GTP to 7,8-dihydroneopterin triphosphate. The chain is GTP cyclohydrolase FolE2 from Macrococcus caseolyticus (strain JCSC5402) (Macrococcoides caseolyticum).